We begin with the raw amino-acid sequence, 541 residues long: Major facilitator-type transporter ecdD (541 aa).

Residues 15-35 (AWPAILISGFVAFGGILFGYD) traverse the membrane as a helical segment. An N-linked (GlcNAc...) asparagine glycan is attached at asparagine 64. 4 helical membrane passes run 72–92 (AIVS…SPMG), 106–126 (GIFV…PFLA), 129–149 (FFAG…QSET), and 156–176 (GFIV…ASVL). Residues asparagine 178 and asparagine 184 are each glycosylated (N-linked (GlcNAc...) asparagine). The chain crosses the membrane as a helical span at residues 191-211 (IPIAVQFAWSIILVGGMLILP). The N-linked (GlcNAc...) asparagine glycan is linked to asparagine 253. Transmembrane regions (helical) follow at residues 277–297 (LVTG…FIMY), 313–333 (VITL…LYAI), 340–360 (PVLL…AVLG), 384–404 (IAFI…SAWV), 418–440 (SLSM…TPYL), and 454–474 (IFFI…FMIY).

It belongs to the major facilitator superfamily. Sugar transporter (TC 2.A.1.1) family.

It is found in the membrane. The sequence is that of Major facilitator-type transporter ecdD from Aspergillus rugulosus (Emericella rugulosa).